A 97-amino-acid polypeptide reads, in one-letter code: Acylphosphatase (97 aa).

The Acylphosphatase-like domain maps to 3–97 (KVKMIVSGRV…PDFTDFNIKY (95 aa)). Residues Arg18 and Asn36 contribute to the active site.

This sequence belongs to the acylphosphatase family.

The enzyme catalyses an acyl phosphate + H2O = a carboxylate + phosphate + H(+). The sequence is that of Acylphosphatase (acyP) from Lactococcus lactis subsp. lactis (strain IL1403) (Streptococcus lactis).